A 180-amino-acid polypeptide reads, in one-letter code: Flavodoxin 2 (180 aa).

The 170-residue stretch at 4 to 173 (IGLFFGSNTG…RVAAWLAQIA (170 aa)) folds into the Flavodoxin-like domain. Residues 10–15 (SNTGKT), T57, G61, D99, 106–108 (NYL), and D155 contribute to the FMN site.

The cofactor is FMN.

Its function is as follows. Flavodoxins are low-potential electron donors to a number of redox enzymes. NifF is the electron donor to nitrogenase, and is thus implicated in nitrogen fixation. Does not function as an electron donor to nitrite reductase. The chain is Flavodoxin 2 from Azotobacter vinelandii.